We begin with the raw amino-acid sequence, 228 residues long: 7-cyano-7-deazaguanine synthase (228 aa).

Residue 10 to 20 (FSGGQDSTTLA) participates in ATP binding. C190, C205, C208, and C211 together coordinate Zn(2+).

It belongs to the QueC family. It depends on Zn(2+) as a cofactor.

The enzyme catalyses 7-carboxy-7-deazaguanine + NH4(+) + ATP = 7-cyano-7-deazaguanine + ADP + phosphate + H2O + H(+). The protein operates within purine metabolism; 7-cyano-7-deazaguanine biosynthesis. Its function is as follows. Catalyzes the ATP-dependent conversion of 7-carboxy-7-deazaguanine (CDG) to 7-cyano-7-deazaguanine (preQ(0)). The sequence is that of 7-cyano-7-deazaguanine synthase from Helicobacter pylori (strain P12).